The sequence spans 392 residues: ATP phosphoribosyltransferase regulatory subunit (392 aa).

Belongs to the class-II aminoacyl-tRNA synthetase family. HisZ subfamily. In terms of assembly, heteromultimer composed of HisG and HisZ subunits.

It localises to the cytoplasm. It participates in amino-acid biosynthesis; L-histidine biosynthesis; L-histidine from 5-phospho-alpha-D-ribose 1-diphosphate: step 1/9. Its function is as follows. Required for the first step of histidine biosynthesis. May allow the feedback regulation of ATP phosphoribosyltransferase activity by histidine. This chain is ATP phosphoribosyltransferase regulatory subunit, found in Gloeobacter violaceus (strain ATCC 29082 / PCC 7421).